Consider the following 237-residue polypeptide: Phosphoribosylaminoimidazole-succinocarboxamide synthase (237 aa).

This sequence belongs to the SAICAR synthetase family.

The enzyme catalyses 5-amino-1-(5-phospho-D-ribosyl)imidazole-4-carboxylate + L-aspartate + ATP = (2S)-2-[5-amino-1-(5-phospho-beta-D-ribosyl)imidazole-4-carboxamido]succinate + ADP + phosphate + 2 H(+). The protein operates within purine metabolism; IMP biosynthesis via de novo pathway; 5-amino-1-(5-phospho-D-ribosyl)imidazole-4-carboxamide from 5-amino-1-(5-phospho-D-ribosyl)imidazole-4-carboxylate: step 1/2. The polypeptide is Phosphoribosylaminoimidazole-succinocarboxamide synthase (Shigella sonnei (strain Ss046)).